The sequence spans 186 residues: Serine hydrolase RBBP9 (186 aa).

Residues 56–70 (LPFMETELHCDEKTI) are retinoblastoma protein binding. An involved in binding to RB1 region spans residues 63–67 (LHCDE). Catalysis depends on charge relay system residues Ser75, Asp138, and His165.

This sequence belongs to the RBBP9 family. Interacts with RB1; the interaction disrupts RB1 binding to E2F1. Interacts with RBL1 and RBL2. As to expression, expressed in spleen.

The catalysed reaction is valacyclovir + H2O = acyclovir + L-valine + H(+). Serine hydrolase. Catalyzes the hydrolytic activation of amino acid ester of the antiviral prodrug valacyclovir to its corresponding active drug, acyclovir. May negatively regulate basal or autocrine TGF-beta signaling by suppressing SMAD2-SMAD3 phosphorylation. May play a role in the transformation process due to its capacity to confer resistance to the growth-inhibitory effects of TGF-beta through interaction with RB1 and the subsequent displacement of E2F1. This Mus musculus (Mouse) protein is Serine hydrolase RBBP9 (Rbbp9).